The primary structure comprises 786 residues: Ribosome biogenesis protein BOP1 homolog (786 aa).

Over residues 1-11 the composition is skewed to basic residues; the sequence is MTKKLTIKRKV. Positions 1–161 are disordered; that stretch reads MTKKLTIKRK…DSDTSDEEDI (161 aa). 4 stretches are compositionally biased toward acidic residues: residues 28-37, 46-55, 62-74, and 86-103; these read DNEEEEEEDL, EDSTDDEGID, SSED…DEEG, and SGDD…EDDA. The span at 104–113 shows a compositional bias: basic and acidic residues; it reads DAKKSSKNND. Positions 151–160 are enriched in acidic residues; the sequence is ADSDTSDEED. WD repeat units lie at residues 447–488, 490–528, 572–614, 617–655, 658–697, 701–740, and 756–786; these read GHTD…RTIE, EDVV…KLLV, THFK…SQIP, KSKG…LIKK, TNSK…KPYQ, LHRN…DLLQ, and REEF…RLFT.

Belongs to the WD repeat BOP1/ERB1 family.

The protein resides in the nucleus. It is found in the nucleolus. It localises to the nucleoplasm. Required for maturation of ribosomal RNAs and formation of the large ribosomal subunit. The chain is Ribosome biogenesis protein BOP1 homolog from Drosophila pseudoobscura pseudoobscura (Fruit fly).